Reading from the N-terminus, the 1170-residue chain is DNA excision repair protein ERCC-5 (1170 aa).

The N-domain stretch occupies residues 1-78 (MGVQGLWKLL…RIRPIFVFDG (78 aa)). K8 carries the post-translational modification N6-acetyllysine. Residue D30 participates in Mg(2+) binding. The tract at residues 31–67 (ISIWLNQALKGVRDSHGNVIENAHLLTLFHRLCKLLF) is DNA-binding; may bind to the undamaged single-strand DNA of the DNA repair bubble. D77 contributes to the Mg(2+) binding site. The tract at residues 79–784 (DAPLLKKQTL…LRLFGVPYIQ (706 aa)) is spacer region. 3 disordered regions span residues 304–479 (DSES…RCDT), 520–587 (HVSG…PKAC), and 600–701 (LENA…ECLL). Over residues 306–323 (ESLPSSSNVHSVSSNLKS) the composition is skewed to low complexity. 2 stretches are compositionally biased toward basic and acidic residues: residues 324-336 (SPHE…REPE) and 363-373 (SREGRQSKERN). Position 384 is a phosphoserine (S384). The span at 455-474 (TSGSSANGQTDSAHSFTTAS) shows a compositional bias: polar residues. A compositionally biased stretch (basic and acidic residues) spans 539–551 (THSDQGIDIHPED). Over residues 659–676 (SVVSNSELQTESSEASTH) the composition is skewed to polar residues. Basic and acidic residues predominate over residues 677–698 (LSEKDAEEPRETLEEGTSRDTE). 2 positions are modified to phosphoserine: S704 and S705. Positions 785 to 880 (APMEAEAQCA…VTAMEILNEF (96 aa)) are I-domain. Positions 788, 790, 809, and 811 each coordinate Mg(2+). The tract at residues 819 to 835 (HVYKNFFNKNKFVEYYQ) is DNA-binding; may bind to the undamaged single-strand DNA of the DNA repair bubble. Residues 847 to 879 (RNKLINLAYLLGSDYTEGIPTVGCVTAMEILNE) form a DNA-binding; H2TH (helix-2turn-helix) motif which binds double-stranded DNA region. Position 860 (D860) interacts with Mg(2+). Positions 911–917 (TKVKKKL) are DNA-binding; may bind double-stranded DNA. An interaction with PCNA region spans residues 980–1008 (LKHLNAHQTQLRIDSFFRLAQQEKQDAKL). An interaction with ERCC6/CSB region spans residues 1010-1170 (KSHRLNRAVT…KSMKRRKKKT (161 aa)). Positions 1033 to 1146 (LTKVTEALDD…DDEDKAKTVL (114 aa)) are disordered. The segment covering 1041-1060 (DDAKGKTQKRELPYKKETSV) has biased composition (basic and acidic residues). A Nuclear localization signal 1 motif is present at residues 1049–1065 (KRELPYKKETSVPKRRR). Residues 1094–1110 (SVMSARQRSAAESSKIS) show a composition bias toward polar residues. The Nuclear localization signal 2 signature appears at 1153–1170 (FGKKKLKLKSMKRRKKKT).

Belongs to the XPG/RAD2 endonuclease family. XPG subfamily. Monomer. Homodimer. Component of the homologous recombination repair (HR) complex composed of ERCC5/XPG, BRCA2, PALB2, DSS1 and RAD51. Within the complex, interacts with BRCA2 and PALB2. Interacts with RNA polymerase II. Interacts (via C-terminus) with ERCC6/CSB; the interaction stimulates ERCC6/CSB binding to the DNA repair bubble and ERCC6/CSB ATPase activity. May form a complex composed of RNA polymerase II, ERCC6/CSB and ERCC5/XPG which associates with the DNA repair bubble during transcription-coupled nucleotide excision repair. Interacts with BRCA1; the interaction promotes the release of BRCA1 from DNA. Interacts with PCNA. Interacts with NTHL1; the interaction stimulates NTHL1 activity and NTHL1 binding to its DNA substrate. It depends on Mg(2+) as a cofactor.

Its subcellular location is the nucleus. It is found in the chromosome. Its function is as follows. Single-stranded structure-specific DNA endonuclease involved in DNA excision repair. Makes the 3'incision in DNA nucleotide excision repair (NER). Binds and bends DNA repair bubble substrate and breaks base stacking at the single-strand/double-strand DNA junction of the DNA bubble. Plays a role in base excision repair (BER) by promoting the binding of DNA glycosylase NTHL1 to its substrate and increasing NTHL1 catalytic activity that removes oxidized pyrimidines from DNA. Involved in transcription-coupled nucleotide excision repair (TCR) which allows RNA polymerase II-blocking lesions to be rapidly removed from the transcribed strand of active genes. Functions during the initial step of TCR in cooperation with ERCC6/CSB to recognized stalled RNA polymerase II. Also, stimulates ERCC6/CSB binding to the DNA repair bubble and ERCC6/CSB ATPase activity. Required for DNA replication fork maintenance and preservation of genomic stability. Involved in homologous recombination repair (HRR) induced by DNA replication stress by recruiting RAD51, BRCA2, and PALB2 to the damaged DNA site. During HRR, binds to the replication fork with high specificity and stabilizes it. Also, acts upstream of HRR, to promote the release of BRCA1 from DNA. The sequence is that of DNA excision repair protein ERCC-5 (Ercc5) from Mus musculus (Mouse).